A 208-amino-acid polypeptide reads, in one-letter code: 2-phospho-L-lactate guanylyltransferase (208 aa).

Belongs to the CofC family. In terms of assembly, homodimer.

The enzyme catalyses (2S)-2-phospholactate + GTP + H(+) = (2S)-lactyl-2-diphospho-5'-guanosine + diphosphate. The protein operates within cofactor biosynthesis; coenzyme F420 biosynthesis. In terms of biological role, guanylyltransferase that catalyzes the activation of (2S)-2-phospholactate (2-PL) as (2S)-lactyl-2-diphospho-5'-guanosine, via the condensation of 2-PL with GTP. It is involved in the biosynthesis of coenzyme F420, a hydride carrier cofactor. The polypeptide is 2-phospho-L-lactate guanylyltransferase (Haloarcula marismortui (strain ATCC 43049 / DSM 3752 / JCM 8966 / VKM B-1809) (Halobacterium marismortui)).